Reading from the N-terminus, the 128-residue chain is Fruiting body differentiation protein 16 (128 aa).

The signal sequence occupies residues 1–19 (MLFSHIVFVALSVFGLVQA).

Functionally, plays a role in the regulation of fruiting body development. In Flammulina velutipes (Agaricus velutipes), this protein is Fruiting body differentiation protein 16.